We begin with the raw amino-acid sequence, 224 residues long: LexA repressor (224 aa).

The segment at residues 31 to 51 (RAEIAAELGFKSANAAEEHLQ) is a DNA-binding region (H-T-H motif). Residues Ser-142 and Lys-179 each act as for autocatalytic cleavage activity in the active site.

Belongs to the peptidase S24 family. In terms of assembly, homodimer.

It carries out the reaction Hydrolysis of Ala-|-Gly bond in repressor LexA.. Functionally, represses a number of genes involved in the response to DNA damage (SOS response), including recA and lexA. In the presence of single-stranded DNA, RecA interacts with LexA causing an autocatalytic cleavage which disrupts the DNA-binding part of LexA, leading to derepression of the SOS regulon and eventually DNA repair. This Acidovorax ebreus (strain TPSY) (Diaphorobacter sp. (strain TPSY)) protein is LexA repressor.